The sequence spans 568 residues: MSIKLKQRFVPQLAAINYQFEEDFSKMLKTVDTSHIKEKTVVKGQVIEIKNDMIIVDVGLKNEGRIPKSEFLSLPEVGDVVEVFIEKIEGRNGRTILSREKAVKEELWGQLEIMCSKGEFVDGTIFGRVKGGFTVDLSGVVAFLPGSQVDVRPIKDPTSIMNIKQPFKILSMDKKLGNIVVSRRVILEESRSEARDEMLSKIKEGMILEGVVKNITDYGAFIDLGSVDGLLHLTDISWGRVNHPSEVLEFNQKVKVMVIKFDEKTKRISLGIKQLDSNPWDAIKEEFPVGKKMTGKVTNFADYGVFLELKDGLEGLVHSSEISWLKSNQNPRKMLTIGQEVEFIVLEVDTEKHRVSLSIKQCQENPLIKFAENNPIGTIIKAPIRNITDFGIFVVLGNNMDGMIHEGDISWEDNGTDLLKSYKKGDEIECKVLAINFEKEQVSLGIKQLSPNPYQKISDEYKKGTIVKAVVTEIKDDGLVVLLNNKVTGFIKRVELSDEKDEQKPEMFQVDEEIDAKVVSIEKSTGRVLLSVKAHKIAERQKTLKEYGSSDNTTNMGDILANVLEEKK.

6 S1 motif domains span residues 39–100 (KTVV…LSRE), 118–184 (GEFV…VSRR), 205–273 (GMIL…LGIK), 290–360 (GKKM…LSIK), 377–447 (GTII…LGIK), and 464–533 (GTIV…LSVK).

It belongs to the bacterial ribosomal protein bS1 family.

In terms of biological role, binds mRNA; thus facilitating recognition of the initiation point. It is needed to translate mRNA with a short Shine-Dalgarno (SD) purine-rich sequence. The polypeptide is Small ribosomal subunit protein bS1 (rpsA) (Rickettsia typhi (strain ATCC VR-144 / Wilmington)).